Consider the following 138-residue polypeptide: Probable phospholipase A2 homolog 1 (138 aa).

An N-terminal signal peptide occupies residues 1-21; that stretch reads MPPRSPLLALVFLAAGVLSSA. 6 disulfides stabilise this stretch: Cys29–Cys56, Cys33–Cys62, Cys38–Cys109, Cys49–Cys69, Cys68–Cys93, and Cys75–Cys86. Ca(2+) contacts are provided by Tyr48, Gly50, and Trp53. Residue His72 is part of the active site. Asp73 is a binding site for Ca(2+).

The protein belongs to the phospholipase A2 family. Ca(2+) is required as a cofactor.

It is found in the secreted. It carries out the reaction a 1,2-diacyl-sn-glycero-3-phosphocholine + H2O = a 1-acyl-sn-glycero-3-phosphocholine + a fatty acid + H(+). Its function is as follows. PA2 catalyzes the calcium-dependent hydrolysis of the 2-acyl groups in 3-sn-phosphoglycerides. Releases lysophospholipids (LPLs) and free fatty acids (FFAs) from membrane phospholipids in response to hormones and other external stimuli. The polypeptide is Probable phospholipase A2 homolog 1 (PLA2-I) (Oryza sativa subsp. japonica (Rice)).